A 1174-amino-acid chain; its full sequence is Carboxylic acid reductase (1174 aa).

AMP contacts are provided by residues H297, S392, 413–414 (EG), T418, D491, 503–506 (YLDR), K512, and K612. A Carrier domain is found at 651-726 (APVLVTVCRA…ALADYVEAAR (76 aa)). An O-(pantetheine 4'-phosphoryl)serine modification is found at S685. NADP(+) is bound by residues 787–791 (TGFLG), R814, R824, 854–855 (DK), 880–882 (PAA), 919–920 (TS), Y956, and K960.

The protein belongs to the ATP-dependent AMP-binding enzyme family. Carboxylic acid reductase subfamily. Pantetheine 4'-phosphate serves as cofactor.

It carries out the reaction a carboxylate + ATP + NADPH + H(+) = an aldehyde + AMP + diphosphate + NADP(+). Its function is as follows. Catalyzes the ATP- and NADPH-dependent reduction of carboxylic acids to the corresponding aldehydes. Catalyzes the reduction of a wide range of aliphatic fatty acids (C6-C18) into their corresponding aldehydes. Can also reduce benzoate to benzaldehyde. Has a preference for NADPH over NADH as the electron donor. This is Carboxylic acid reductase from Mycobacterium marinum (strain ATCC BAA-535 / M).